A 302-amino-acid polypeptide reads, in one-letter code: MSDSRRVPITFQGLIQTLNQYWAEQGCVLIQPLDLEVGAGTFHPATFLRALGPEPWNAAYVQPSRRPTDGRYGENPNRLQRYYQYQVAMKPNPDNIQDLYLGSLKALGIDPLVHDLRFVEDNWESPTLGAWGLGWEVWLNGMEVTQFTYFQQAGGLECKPVLGEITYGLERLCMYLQSCDNVYDLVWTYGPDGTPVTYGDVYHQNEVEQSAYNFEHANVEELFHRFDACEAEAKHLVEVGLPLPAYEQVTKASHAFNLLDARRAISVTERQRYILRVRALAQGVAQAYYAQREKLGFPGVKK.

It belongs to the class-II aminoacyl-tRNA synthetase family. As to quaternary structure, tetramer of two alpha and two beta subunits.

The protein resides in the cytoplasm. It catalyses the reaction tRNA(Gly) + glycine + ATP = glycyl-tRNA(Gly) + AMP + diphosphate. The polypeptide is Glycine--tRNA ligase alpha subunit (Xanthomonas campestris pv. campestris (strain 8004)).